The primary structure comprises 204 residues: DNA polymerase epsilon subunit D (204 aa).

Basic and acidic residues predominate over residues 165–177 (KEVQRRRAEKTPA). Residues 165-204 (KEVQRRRAEKTPAADEGQAEEGDAADEEEGSHKRAKLDEH) form a disordered region. The span at 181-193 (GQAEEGDAADEEE) shows a compositional bias: acidic residues. The span at 194–204 (GSHKRAKLDEH) shows a compositional bias: basic and acidic residues.

Heterotetramer. Consists of four subunits: POL2, DPB2, DPB3 and DPB4.

It localises to the nucleus. Functionally, as accessory component of the DNA polymerase epsilon (DNA polymerase II) participates in chromosomal DNA replication. This chain is DNA polymerase epsilon subunit D (DPB4), found in Eremothecium gossypii (strain ATCC 10895 / CBS 109.51 / FGSC 9923 / NRRL Y-1056) (Yeast).